The primary structure comprises 452 residues: Glycoprotein endo-alpha-1,2-mannosidase-like protein (452 aa).

Topologically, residues 1–8 are cytoplasmic; that stretch reads MARRRRRA. The helical; Signal-anchor for type II membrane protein transmembrane segment at 9–29 threads the bilayer; it reads CIALFLVLLFAFGTLMGLRTL. Residues 30–452 lie on the Lumenal side of the membrane; it reads KAPDGLPALG…FIKEKEQWLM (423 aa). The interval 40-90 is disordered; that stretch reads PGPELAPFERRPEGNPAPARAPAAPAAPPPPPPRTAAPRASLGPAEADPAP. Positions 64–74 are enriched in pro residues; the sequence is PAAPPPPPPRT.

Belongs to the glycosyl hydrolase 99 family.

It localises to the golgi apparatus membrane. In Mus musculus (Mouse), this protein is Glycoprotein endo-alpha-1,2-mannosidase-like protein (Maneal).